A 472-amino-acid chain; its full sequence is Divinyl ether synthase CYP74 (472 aa).

Residue C425 coordinates heme.

It belongs to the cytochrome P450 family. It depends on heme as a cofactor. Expressed mainly in bulbs, and at lower levels in roots.

The enzyme catalyses (13S)-hydroperoxy-(9Z,11E)-octadecadienoate = etheroleate + H2O. It carries out the reaction (13S)-hydroperoxy-(9Z,11E,15Z)-octadecatrienoate = etherolenate + H2O. It catalyses the reaction (9S)-hydroperoxy-(10E,12Z)-octadecadienoate = colneleate + H2O. The catalysed reaction is (9S)-hydroperoxy-(10E,12Z,15Z)-octadecatrienoate = colnelenate + H2O. It functions in the pathway lipid metabolism; oxylipin biosynthesis. Its function is as follows. Divinyl ether synthase involved in oxylipin biosynthesis. Catalyzes the conversion of (13S)-hydroperoxy-(9Z,11E)-octadecadienoate (13-HPOD) to etheroleate and (13S)-hydroperoxy-(9Z,11E,15Z)-octadecatrienoate (13-HPOT) to etherolenate. Catalyzes the conversion of (9S)-hydroperoxy-(10E,12Z)-octadecadienoate (9-HPOD) to colneleate and (9S)-hydroperoxy-(10E,12Z,15Z)-octadecatrienoate (9-HPOT) colnelenate. The protein is Divinyl ether synthase CYP74 of Allium sativum (Garlic).